A 523-amino-acid polypeptide reads, in one-letter code: FAD:protein FMN transferase (523 aa).

Transmembrane regions (helical) follow at residues 88-108, 118-138, and 169-189; these read LLAG…VALA, GGAA…LVLL, and GLAL…TAPA. FAD is bound by residues 277-279 and aspartate 336; that span reads LFD. Alanine 339 contacts Mg(2+). FAD is bound by residues lysine 342 and 423-425; that span reads HII. The Mg(2+) site is built by aspartate 450 and threonine 454.

This sequence in the N-terminal section; belongs to the RseC family. The protein in the C-terminal section; belongs to the ApbE family. Mg(2+) is required as a cofactor.

The protein resides in the cell membrane. It carries out the reaction L-threonyl-[protein] + FAD = FMN-L-threonyl-[protein] + AMP + H(+). Functionally, flavin transferase that catalyzes the transfer of the FMN moiety of FAD and its covalent binding to the hydroxyl group of a threonine residue in a target flavoprotein. Is likely involved in the modification of RnfG and RnfD. Required for nitrogen fixation. The protein is FAD:protein FMN transferase of Rhodobacter capsulatus (Rhodopseudomonas capsulata).